The chain runs to 475 residues: 23S rRNA (uracil(1939)-C(5))-methyltransferase RlmD (475 aa).

A compositionally biased stretch (basic residues) spans M1–P10. The tract at residues M1–D33 is disordered. Residues A13–A30 show a composition bias toward basic and acidic residues. A TRAM domain is found at R26–E85. C98, C104, C107, and C183 together coordinate [4Fe-4S] cluster. 6 residues coordinate S-adenosyl-L-methionine: Q294, F323, N328, E344, D371, and D388. Catalysis depends on C414, which acts as the Nucleophile. The segment at T455–P475 is disordered. Residues D457–P475 show a composition bias toward basic and acidic residues.

Belongs to the class I-like SAM-binding methyltransferase superfamily. RNA M5U methyltransferase family. RlmD subfamily.

It catalyses the reaction uridine(1939) in 23S rRNA + S-adenosyl-L-methionine = 5-methyluridine(1939) in 23S rRNA + S-adenosyl-L-homocysteine + H(+). Catalyzes the formation of 5-methyl-uridine at position 1939 (m5U1939) in 23S rRNA. In Chromohalobacter salexigens (strain ATCC BAA-138 / DSM 3043 / CIP 106854 / NCIMB 13768 / 1H11), this protein is 23S rRNA (uracil(1939)-C(5))-methyltransferase RlmD.